The chain runs to 261 residues: Ribonuclease HII (261 aa).

A compositionally biased stretch (basic and acidic residues) spans Met-1–Val-20. The segment at Met-1–Ala-23 is disordered. In terms of domain architecture, RNase H type-2 spans Trp-42–Pro-230. The a divalent metal cation site is built by Asp-48, Glu-49, and Asp-139.

Belongs to the RNase HII family. Mn(2+) serves as cofactor. It depends on Mg(2+) as a cofactor.

The protein resides in the cytoplasm. The enzyme catalyses Endonucleolytic cleavage to 5'-phosphomonoester.. Its function is as follows. Endonuclease that specifically degrades the RNA of RNA-DNA hybrids. In Bradyrhizobium diazoefficiens (strain JCM 10833 / BCRC 13528 / IAM 13628 / NBRC 14792 / USDA 110), this protein is Ribonuclease HII.